Reading from the N-terminus, the 215-residue chain is Protein NETWORKED 3B (215 aa).

The NAB domain occupies 5 to 90 (SKWWWIGANH…QKHDLLIKTS (86 aa)). A coiled-coil region spans residues 134-165 (DETMKEELEILREENRVYKEKKEVVTRLLANL).

The protein belongs to the NET family. As to quaternary structure, interacts with F-actin.

Plant-specific actin binding protein. May be part of a membrane-cytoskeletal adapter complex. The chain is Protein NETWORKED 3B from Arabidopsis thaliana (Mouse-ear cress).